A 66-amino-acid polypeptide reads, in one-letter code: Large ribosomal subunit protein uL29 (66 aa).

This sequence belongs to the universal ribosomal protein uL29 family.

The chain is Large ribosomal subunit protein uL29 from Borrelia garinii subsp. bavariensis (strain ATCC BAA-2496 / DSM 23469 / PBi) (Borreliella bavariensis).